The sequence spans 327 residues: Phenylalanine--tRNA ligase alpha subunit (327 aa).

E252 is a Mg(2+) binding site.

This sequence belongs to the class-II aminoacyl-tRNA synthetase family. Phe-tRNA synthetase alpha subunit type 1 subfamily. Tetramer of two alpha and two beta subunits. The cofactor is Mg(2+).

Its subcellular location is the cytoplasm. It catalyses the reaction tRNA(Phe) + L-phenylalanine + ATP = L-phenylalanyl-tRNA(Phe) + AMP + diphosphate + H(+). The sequence is that of Phenylalanine--tRNA ligase alpha subunit from Shewanella baltica (strain OS223).